Here is a 153-residue protein sequence, read N- to C-terminus: Aspartate carbamoyltransferase regulatory chain (153 aa).

Residues Cys-109, Cys-114, Cys-138, and Cys-141 each contribute to the Zn(2+) site.

Belongs to the PyrI family. As to quaternary structure, contains catalytic and regulatory chains. Zn(2+) is required as a cofactor.

In terms of biological role, involved in allosteric regulation of aspartate carbamoyltransferase. This is Aspartate carbamoyltransferase regulatory chain from Vibrio vulnificus (strain YJ016).